Consider the following 177-residue polypeptide: 3-hydroxydecanoyl-[acyl-carrier-protein] dehydratase (177 aa).

His71 is a catalytic residue.

The protein belongs to the thioester dehydratase family. FabA subfamily. In terms of assembly, homodimer.

Its subcellular location is the cytoplasm. The catalysed reaction is a (3R)-hydroxyacyl-[ACP] = a (2E)-enoyl-[ACP] + H2O. It catalyses the reaction (3R)-hydroxydecanoyl-[ACP] = (2E)-decenoyl-[ACP] + H2O. The enzyme catalyses (2E)-decenoyl-[ACP] = (3Z)-decenoyl-[ACP]. It functions in the pathway lipid metabolism; fatty acid biosynthesis. Functionally, necessary for the introduction of cis unsaturation into fatty acids. Catalyzes the dehydration of (3R)-3-hydroxydecanoyl-ACP to E-(2)-decenoyl-ACP and then its isomerization to Z-(3)-decenoyl-ACP. Can catalyze the dehydratase reaction for beta-hydroxyacyl-ACPs with saturated chain lengths up to 16:0, being most active on intermediate chain length. This Wigglesworthia glossinidia brevipalpis protein is 3-hydroxydecanoyl-[acyl-carrier-protein] dehydratase.